The chain runs to 176 residues: Large ribosomal subunit protein uL6 (176 aa).

Positions 153 to 170 (PEPYKGKGIRYGDEEVRR) are enriched in basic and acidic residues. Residues 153–176 (PEPYKGKGIRYGDEEVRRKEAKKK) are disordered.

It belongs to the universal ribosomal protein uL6 family. Part of the 50S ribosomal subunit.

Its function is as follows. This protein binds to the 23S rRNA, and is important in its secondary structure. It is located near the subunit interface in the base of the L7/L12 stalk, and near the tRNA binding site of the peptidyltransferase center. The protein is Large ribosomal subunit protein uL6 of Chromohalobacter salexigens (strain ATCC BAA-138 / DSM 3043 / CIP 106854 / NCIMB 13768 / 1H11).